The primary structure comprises 137 residues: MLQPKRTKFRKQFKGRIHGVAKGGTDLNFGAYGLKAVEPERVTARQIEAARRAITRYMKRSGRVWIRIFPDLPVTSKPTEVRMGKGKGSVDYWAARVAPGRVMFELDGVPEDVAREALRLGAAKLPIKTRFIQRIAE.

Belongs to the universal ribosomal protein uL16 family. As to quaternary structure, part of the 50S ribosomal subunit.

In terms of biological role, binds 23S rRNA and is also seen to make contacts with the A and possibly P site tRNAs. The sequence is that of Large ribosomal subunit protein uL16 from Bartonella tribocorum (strain CIP 105476 / IBS 506).